Consider the following 301-residue polypeptide: Isonocardicin synthase (301 aa).

In terms of assembly, monomer.

It catalyses the reaction nocardicin G + S-adenosyl-L-methionine = isonocardicin C + S-methyl-5'-thioadenosine + H(+). The enzyme catalyses nocardicin E + S-adenosyl-L-methionine = isonocardicin A + S-methyl-5'-thioadenosine + H(+). It functions in the pathway antibiotic biosynthesis. Functionally, involved in the biosynthesis of the beta-lactam antibiotic nocardicin A. In the presence of S-adenosyl-L-methionine (AdoMet), catalyzes the transfer of a 3-amino-3-carboxypropyl group from AdoMet to nocardicin G, forming isonocardicin C. Can also catalyze the transformation of nocardicin E and F to isonocardicin A and B, respectively, but in vivo substrate is probably nocardicin G. The polypeptide is Isonocardicin synthase (Nocardia uniformis subsp. tsuyamanensis).